The sequence spans 179 residues: Bifunctional protein PyrR (179 aa).

Residues 39–40, 101–109, R134, and V158 each bind substrate; these read RR and DDVLFTGRT. A PRPP-binding motif is present at residues 97–109; it reads VILIDDVLFTGRT.

It belongs to the purine/pyrimidine phosphoribosyltransferase family. PyrR subfamily.

The catalysed reaction is UMP + diphosphate = 5-phospho-alpha-D-ribose 1-diphosphate + uracil. In terms of biological role, regulates the transcription of the pyrimidine nucleotide (pyr) operon in response to exogenous pyrimidines. Also displays a weak uracil phosphoribosyltransferase activity which is not physiologically significant. This Haemophilus ducreyi (strain 35000HP / ATCC 700724) protein is Bifunctional protein PyrR.